The sequence spans 26 residues: uncharacterized protein (26 aa).

A helical transmembrane segment spans residues 3–23 (IIYLILFLIVIYLLYRILDVL).

It localises to the membrane. This is an uncharacterized protein from Helicobacter pylori (strain J99 / ATCC 700824) (Campylobacter pylori J99).